A 303-amino-acid chain; its full sequence is UDP-3-O-acyl-N-acetylglucosamine deacetylase (303 aa).

Positions 78, 237, and 241 each coordinate Zn(2+). The active-site Proton donor is His-264.

This sequence belongs to the LpxC family. It depends on Zn(2+) as a cofactor.

It carries out the reaction a UDP-3-O-[(3R)-3-hydroxyacyl]-N-acetyl-alpha-D-glucosamine + H2O = a UDP-3-O-[(3R)-3-hydroxyacyl]-alpha-D-glucosamine + acetate. Its pathway is glycolipid biosynthesis; lipid IV(A) biosynthesis; lipid IV(A) from (3R)-3-hydroxytetradecanoyl-[acyl-carrier-protein] and UDP-N-acetyl-alpha-D-glucosamine: step 2/6. Catalyzes the hydrolysis of UDP-3-O-myristoyl-N-acetylglucosamine to form UDP-3-O-myristoylglucosamine and acetate, the committed step in lipid A biosynthesis. The protein is UDP-3-O-acyl-N-acetylglucosamine deacetylase of Xanthomonas oryzae pv. oryzae (strain MAFF 311018).